The chain runs to 318 residues: MSQSRHVPVMLQRCLDMLAPALTEPGAVVVDCTLGLGGHSEALLTQFPEARLVALDRDKEALRLSGERLAPFGDRATLVHAVYDELPDVLDRLGVPRVQGVLFDLGVSSMQLDEADRGFAYAQDAPLDMRMDQTTGISAAEVLNTYPPGEIVRILRAYGEEKQAKRIVSAIVREREKEPFSNSARLVELIRDSLPQAAKRTGGNPAKRTFQALRIEVNGELSVLERAIPAAVKALAVGGRIAVLSYHSLEDRLVKQVFAAGAATTAPPGLPVVPERYQPRLKLLTRGAELPTEEEIAENRRAAPARLRGAQRIREDAE.

S-adenosyl-L-methionine-binding positions include 37 to 39 (GGH), D56, Y83, D104, and Q111. The tract at residues 293–318 (EEEIAENRRAAPARLRGAQRIREDAE) is disordered.

It belongs to the methyltransferase superfamily. RsmH family.

It is found in the cytoplasm. The enzyme catalyses cytidine(1402) in 16S rRNA + S-adenosyl-L-methionine = N(4)-methylcytidine(1402) in 16S rRNA + S-adenosyl-L-homocysteine + H(+). Its function is as follows. Specifically methylates the N4 position of cytidine in position 1402 (C1402) of 16S rRNA. The chain is Ribosomal RNA small subunit methyltransferase H from Streptomyces avermitilis (strain ATCC 31267 / DSM 46492 / JCM 5070 / NBRC 14893 / NCIMB 12804 / NRRL 8165 / MA-4680).